The sequence spans 247 residues: Ubiquinone biosynthesis O-methyltransferase (247 aa).

S-adenosyl-L-methionine-binding residues include Arg39, Gly70, Asp91, and Met134.

It belongs to the methyltransferase superfamily. UbiG/COQ3 family.

The catalysed reaction is a 3-demethylubiquinol + S-adenosyl-L-methionine = a ubiquinol + S-adenosyl-L-homocysteine + H(+). The enzyme catalyses a 3-(all-trans-polyprenyl)benzene-1,2-diol + S-adenosyl-L-methionine = a 2-methoxy-6-(all-trans-polyprenyl)phenol + S-adenosyl-L-homocysteine + H(+). It participates in cofactor biosynthesis; ubiquinone biosynthesis. In terms of biological role, O-methyltransferase that catalyzes the 2 O-methylation steps in the ubiquinone biosynthetic pathway. The polypeptide is Ubiquinone biosynthesis O-methyltransferase (Cereibacter sphaeroides (strain ATCC 17023 / DSM 158 / JCM 6121 / CCUG 31486 / LMG 2827 / NBRC 12203 / NCIMB 8253 / ATH 2.4.1.) (Rhodobacter sphaeroides)).